Consider the following 442-residue polypeptide: ATP-dependent protease ATPase subunit HslU (442 aa).

ATP contacts are provided by residues isoleucine 18, 60 to 65 (GVGKTE), aspartate 255, glutamate 320, and arginine 392.

Belongs to the ClpX chaperone family. HslU subfamily. In terms of assembly, a double ring-shaped homohexamer of HslV is capped on each side by a ring-shaped HslU homohexamer. The assembly of the HslU/HslV complex is dependent on binding of ATP.

The protein localises to the cytoplasm. Its function is as follows. ATPase subunit of a proteasome-like degradation complex; this subunit has chaperone activity. The binding of ATP and its subsequent hydrolysis by HslU are essential for unfolding of protein substrates subsequently hydrolyzed by HslV. HslU recognizes the N-terminal part of its protein substrates and unfolds these before they are guided to HslV for hydrolysis. The protein is ATP-dependent protease ATPase subunit HslU of Shewanella sp. (strain W3-18-1).